The primary structure comprises 367 residues: Glutamate 5-kinase (367 aa).

An ATP-binding site is contributed by K10. Substrate-binding residues include S50, D137, and N149. Residues 169–170 and 211–217 contribute to the ATP site; these read TD and TGGMSTK. Residues 275–353 enclose the PUA domain; it reads AGIITIDAGA…QDIEQVLGYE (79 aa).

This sequence belongs to the glutamate 5-kinase family.

It is found in the cytoplasm. It carries out the reaction L-glutamate + ATP = L-glutamyl 5-phosphate + ADP. It participates in amino-acid biosynthesis; L-proline biosynthesis; L-glutamate 5-semialdehyde from L-glutamate: step 1/2. Functionally, catalyzes the transfer of a phosphate group to glutamate to form L-glutamate 5-phosphate. This chain is Glutamate 5-kinase, found in Pasteurella multocida (strain Pm70).